We begin with the raw amino-acid sequence, 158 residues long: Snaclec jerdonuxin subunit alpha (158 aa).

A signal peptide spans 1–23 (MGRFTFVSFGLLVVFLSLSGTGA). Cystine bridges form between C27–C38, C55–C152, and C127–C144. The C-type lectin domain occupies 34-153 (YDRYCYQAFS…CGTENPFVCK (120 aa)).

This sequence belongs to the snaclec family. In terms of assembly, tetramer of 4 heterodimers of alpha and beta subunits; disulfide-linked. In terms of tissue distribution, expressed by the venom gland.

The protein localises to the secreted. In terms of biological role, snaclec that strongly induces platelet aggregation, in a dose-dependent manner. This is Snaclec jerdonuxin subunit alpha from Protobothrops jerdonii (Jerdon's pitviper).